A 362-amino-acid polypeptide reads, in one-letter code: tRNA N6-adenosine threonylcarbamoyltransferase (362 aa).

Histidine 120 and histidine 124 together coordinate Fe cation. Residues 142-146 (LASGG), aspartate 175, glycine 188, and asparagine 288 each bind substrate. Aspartate 316 contacts Fe cation. A compositionally biased stretch (basic and acidic residues) spans 342-351 (RPRWPLDPDA). Positions 342–362 (RPRWPLDPDAPKAAGAGGVKA) are disordered.

This sequence belongs to the KAE1 / TsaD family. Fe(2+) serves as cofactor.

Its subcellular location is the cytoplasm. It catalyses the reaction L-threonylcarbamoyladenylate + adenosine(37) in tRNA = N(6)-L-threonylcarbamoyladenosine(37) in tRNA + AMP + H(+). Functionally, required for the formation of a threonylcarbamoyl group on adenosine at position 37 (t(6)A37) in tRNAs that read codons beginning with adenine. Is involved in the transfer of the threonylcarbamoyl moiety of threonylcarbamoyl-AMP (TC-AMP) to the N6 group of A37, together with TsaE and TsaB. TsaD likely plays a direct catalytic role in this reaction. This Rhodospirillum rubrum (strain ATCC 11170 / ATH 1.1.1 / DSM 467 / LMG 4362 / NCIMB 8255 / S1) protein is tRNA N6-adenosine threonylcarbamoyltransferase.